A 95-amino-acid chain; its full sequence is Aspartyl/glutamyl-tRNA(Asn/Gln) amidotransferase subunit C (95 aa).

This sequence belongs to the GatC family. In terms of assembly, heterotrimer of A, B and C subunits.

The enzyme catalyses L-glutamyl-tRNA(Gln) + L-glutamine + ATP + H2O = L-glutaminyl-tRNA(Gln) + L-glutamate + ADP + phosphate + H(+). The catalysed reaction is L-aspartyl-tRNA(Asn) + L-glutamine + ATP + H2O = L-asparaginyl-tRNA(Asn) + L-glutamate + ADP + phosphate + 2 H(+). Its function is as follows. Allows the formation of correctly charged Asn-tRNA(Asn) or Gln-tRNA(Gln) through the transamidation of misacylated Asp-tRNA(Asn) or Glu-tRNA(Gln) in organisms which lack either or both of asparaginyl-tRNA or glutaminyl-tRNA synthetases. The reaction takes place in the presence of glutamine and ATP through an activated phospho-Asp-tRNA(Asn) or phospho-Glu-tRNA(Gln). The protein is Aspartyl/glutamyl-tRNA(Asn/Gln) amidotransferase subunit C of Dehalococcoides mccartyi (strain CBDB1).